The following is a 273-amino-acid chain: Putative phosphoenolpyruvate synthase regulatory protein (273 aa).

An ADP-binding site is contributed by 153–160 (GVSRSGKT).

The protein belongs to the pyruvate, phosphate/water dikinase regulatory protein family. PSRP subfamily.

The enzyme catalyses [pyruvate, water dikinase] + ADP = [pyruvate, water dikinase]-phosphate + AMP + H(+). It catalyses the reaction [pyruvate, water dikinase]-phosphate + phosphate + H(+) = [pyruvate, water dikinase] + diphosphate. Its function is as follows. Bifunctional serine/threonine kinase and phosphorylase involved in the regulation of the phosphoenolpyruvate synthase (PEPS) by catalyzing its phosphorylation/dephosphorylation. The polypeptide is Putative phosphoenolpyruvate synthase regulatory protein (Albidiferax ferrireducens (strain ATCC BAA-621 / DSM 15236 / T118) (Rhodoferax ferrireducens)).